A 452-amino-acid chain; its full sequence is Phosphoglucosamine mutase (452 aa).

Ser-112 serves as the catalytic Phosphoserine intermediate. Residues Ser-112, Asp-251, Asp-253, and Asp-255 each coordinate Mg(2+). At Ser-112 the chain carries Phosphoserine.

Belongs to the phosphohexose mutase family. Mg(2+) serves as cofactor. Post-translationally, activated by phosphorylation.

The enzyme catalyses alpha-D-glucosamine 1-phosphate = D-glucosamine 6-phosphate. Its function is as follows. Catalyzes the conversion of glucosamine-6-phosphate to glucosamine-1-phosphate. The chain is Phosphoglucosamine mutase from Bordetella bronchiseptica (strain ATCC BAA-588 / NCTC 13252 / RB50) (Alcaligenes bronchisepticus).